The primary structure comprises 321 residues: D-alanine--D-alanine ligase (321 aa).

Positions 121–315 (RSWFLTNNIN…FTNLIEEIIK (195 aa)) constitute an ATP-grasp domain. An ATP-binding site is contributed by 147–199 (PMKRPYVIKPLTQGSSIGVEVIFAEDNFNFADYDFPYGDQVIIEQYIKGRELQ). E268, E282, and N284 together coordinate Mg(2+).

Belongs to the D-alanine--D-alanine ligase family. The cofactor is Mg(2+). It depends on Mn(2+) as a cofactor.

The protein resides in the cytoplasm. It carries out the reaction 2 D-alanine + ATP = D-alanyl-D-alanine + ADP + phosphate + H(+). Its pathway is cell wall biogenesis; peptidoglycan biosynthesis. In terms of biological role, cell wall formation. The polypeptide is D-alanine--D-alanine ligase (Rickettsia massiliae (strain Mtu5)).